A 119-amino-acid polypeptide reads, in one-letter code: Ribonuclease P protein component (119 aa).

Belongs to the RnpA family. As to quaternary structure, consists of a catalytic RNA component (M1 or rnpB) and a protein subunit.

It catalyses the reaction Endonucleolytic cleavage of RNA, removing 5'-extranucleotides from tRNA precursor.. RNaseP catalyzes the removal of the 5'-leader sequence from pre-tRNA to produce the mature 5'-terminus. It can also cleave other RNA substrates such as 4.5S RNA. The protein component plays an auxiliary but essential role in vivo by binding to the 5'-leader sequence and broadening the substrate specificity of the ribozyme. The polypeptide is Ribonuclease P protein component (Aeromonas salmonicida (strain A449)).